We begin with the raw amino-acid sequence, 141 residues long: Hemoglobin subunit beta-C (141 aa).

Positions 1-141 constitute a Globin domain; that stretch reads PNKALITGFW…VASALAHRYH (141 aa). Heme b-binding residues include His58 and His87.

This sequence belongs to the globin family. As to quaternary structure, heterotetramer of two alpha chains and two beta chains. As to expression, red blood cells.

In terms of biological role, involved in oxygen transport from the lung to the various peripheral tissues. The chain is Hemoglobin subunit beta-C (HBBC) from Ovis aries musimon (Mouflon).